Here is a 339-residue protein sequence, read N- to C-terminus: Ketol-acid reductoisomerase (NADP(+)) (339 aa).

A KARI N-terminal Rossmann domain is found at 1–182 (MRVYYDRDAD…GGGRAGIIET (182 aa)). Residues 24 to 27 (YGSQ), arginine 48, serine 51, serine 53, and 83 to 86 (DELQ) contribute to the NADP(+) site. The active site involves histidine 108. Glycine 134 is an NADP(+) binding site. The KARI C-terminal knotted domain maps to 183 to 328 (TFREECETDL…AKLRDMMPWI (146 aa)). Aspartate 191, glutamate 195, glutamate 227, and glutamate 231 together coordinate Mg(2+). Serine 252 provides a ligand contact to substrate.

The protein belongs to the ketol-acid reductoisomerase family. Mg(2+) serves as cofactor.

It carries out the reaction (2R)-2,3-dihydroxy-3-methylbutanoate + NADP(+) = (2S)-2-acetolactate + NADPH + H(+). The enzyme catalyses (2R,3R)-2,3-dihydroxy-3-methylpentanoate + NADP(+) = (S)-2-ethyl-2-hydroxy-3-oxobutanoate + NADPH + H(+). It functions in the pathway amino-acid biosynthesis; L-isoleucine biosynthesis; L-isoleucine from 2-oxobutanoate: step 2/4. Its pathway is amino-acid biosynthesis; L-valine biosynthesis; L-valine from pyruvate: step 2/4. Functionally, involved in the biosynthesis of branched-chain amino acids (BCAA). Catalyzes an alkyl-migration followed by a ketol-acid reduction of (S)-2-acetolactate (S2AL) to yield (R)-2,3-dihydroxy-isovalerate. In the isomerase reaction, S2AL is rearranged via a Mg-dependent methyl migration to produce 3-hydroxy-3-methyl-2-ketobutyrate (HMKB). In the reductase reaction, this 2-ketoacid undergoes a metal-dependent reduction by NADPH to yield (R)-2,3-dihydroxy-isovalerate. The sequence is that of Ketol-acid reductoisomerase (NADP(+)) from Nitrobacter hamburgensis (strain DSM 10229 / NCIMB 13809 / X14).